A 291-amino-acid chain; its full sequence is Transmembrane O-methyltransferase (291 aa).

Residues 31–51 (VGTMSPAIALAFLPLVVTLLV) traverse the membrane as a helical segment. S-adenosyl-L-methionine-binding positions include glutamate 137, 139–140 (GT), serine 145, glutamate 163, and serine 193.

This sequence belongs to the class I-like SAM-binding methyltransferase superfamily. Cation-dependent O-methyltransferase family. Interacts with LHFPL5, PCDH15, TMC1, TMC2 and TMIE. Interacts directly with TMC1. The interaction of TOMT with TMC1 and TMC2 is required for the transportation of TMC1/2 into the stereocilia of hair cells.

The protein localises to the membrane. Its subcellular location is the cytoplasm. The protein resides in the endoplasmic reticulum. It catalyses the reaction a catechol + S-adenosyl-L-methionine = a guaiacol + S-adenosyl-L-homocysteine + H(+). Its function is as follows. Catalyzes the O-methylation, and thereby the inactivation, of catecholamine neurotransmitters and catechol hormones. Required for auditory function. Component of the cochlear hair cell's mechanotransduction (MET) machinery. Involved in the assembly of the asymmetric tip-link MET complex. Required for transportation of TMC1 and TMC2 proteins into the mechanically sensitive stereocilia of the hair cells. The function in MET is independent of the enzymatic activity. The chain is Transmembrane O-methyltransferase from Homo sapiens (Human).